Consider the following 267-residue polypeptide: Formamidopyrimidine-DNA glycosylase (267 aa).

Pro-2 acts as the Schiff-base intermediate with DNA in catalysis. Glu-3 functions as the Proton donor in the catalytic mechanism. Lys-58 serves as the catalytic Proton donor; for beta-elimination activity. Positions 91, 110, and 152 each coordinate DNA. The FPG-type zinc finger occupies 233-267 (DVYGRGHGTCTSCGGALEAVRLGNRSTVFCPRCQQ). The Proton donor; for delta-elimination activity role is filled by Arg-257.

Belongs to the FPG family. In terms of assembly, monomer. It depends on Zn(2+) as a cofactor.

It carries out the reaction Hydrolysis of DNA containing ring-opened 7-methylguanine residues, releasing 2,6-diamino-4-hydroxy-5-(N-methyl)formamidopyrimidine.. It catalyses the reaction 2'-deoxyribonucleotide-(2'-deoxyribose 5'-phosphate)-2'-deoxyribonucleotide-DNA = a 3'-end 2'-deoxyribonucleotide-(2,3-dehydro-2,3-deoxyribose 5'-phosphate)-DNA + a 5'-end 5'-phospho-2'-deoxyribonucleoside-DNA + H(+). In terms of biological role, involved in base excision repair of DNA damaged by oxidation or by mutagenic agents. Acts as a DNA glycosylase that recognizes and removes damaged bases. Has a preference for oxidized purines, such as 7,8-dihydro-8-oxoguanine (8-oxoG). Has AP (apurinic/apyrimidinic) lyase activity and introduces nicks in the DNA strand. Cleaves the DNA backbone by beta-delta elimination to generate a single-strand break at the site of the removed base with both 3'- and 5'-phosphates. This chain is Formamidopyrimidine-DNA glycosylase, found in Pelobacter propionicus (strain DSM 2379 / NBRC 103807 / OttBd1).